Consider the following 407-residue polypeptide: Tryptophan synthase beta chain (407 aa).

The residue at position 91 (K91) is an N6-(pyridoxal phosphate)lysine.

It belongs to the TrpB family. In terms of assembly, tetramer of two alpha and two beta chains. Requires pyridoxal 5'-phosphate as cofactor.

It catalyses the reaction (1S,2R)-1-C-(indol-3-yl)glycerol 3-phosphate + L-serine = D-glyceraldehyde 3-phosphate + L-tryptophan + H2O. Its pathway is amino-acid biosynthesis; L-tryptophan biosynthesis; L-tryptophan from chorismate: step 5/5. In terms of biological role, the beta subunit is responsible for the synthesis of L-tryptophan from indole and L-serine. This Streptococcus pneumoniae (strain Hungary19A-6) protein is Tryptophan synthase beta chain.